Consider the following 63-residue polypeptide: DNA gyrase inhibitor YacG (63 aa).

Positions 10, 13, 29, and 33 each coordinate Zn(2+).

It belongs to the DNA gyrase inhibitor YacG family. Interacts with GyrB. Zn(2+) is required as a cofactor.

Inhibits all the catalytic activities of DNA gyrase by preventing its interaction with DNA. Acts by binding directly to the C-terminal domain of GyrB, which probably disrupts DNA binding by the gyrase. The protein is DNA gyrase inhibitor YacG of Chromobacterium violaceum (strain ATCC 12472 / DSM 30191 / JCM 1249 / CCUG 213 / NBRC 12614 / NCIMB 9131 / NCTC 9757 / MK).